We begin with the raw amino-acid sequence, 347 residues long: uncharacterized protein (347 aa).

Coiled coils occupy residues 148 to 201 and 261 to 298; these read DQQS…EKDG and LENLTFRLNLINDLNKKEEEKEKEKEKEKEENSFDTFS. The segment at 151–203 is disordered; the sequence is SISNLRKEEKEKQKENENENENENENENENEKENQELDKKVNQTNDNEKDGDE. Over residues 155–167 the composition is skewed to basic and acidic residues; it reads LRKEEKEKQKENE. A compositionally biased stretch (acidic residues) spans 168-178; it reads NENENENENEN. Residues 179–191 are compositionally biased toward basic and acidic residues; that stretch reads ENEKENQELDKKV.

This is an uncharacterized protein from Dictyostelium discoideum (Social amoeba).